The sequence spans 291 residues: 33 kDa chaperonin (291 aa).

2 disulfide bridges follow: Cys229–Cys231 and Cys262–Cys265.

The protein belongs to the HSP33 family. Under oxidizing conditions two disulfide bonds are formed involving the reactive cysteines. Under reducing conditions zinc is bound to the reactive cysteines and the protein is inactive.

Its subcellular location is the cytoplasm. Its function is as follows. Redox regulated molecular chaperone. Protects both thermally unfolding and oxidatively damaged proteins from irreversible aggregation. Plays an important role in the bacterial defense system toward oxidative stress. The sequence is that of 33 kDa chaperonin from Aliivibrio salmonicida (strain LFI1238) (Vibrio salmonicida (strain LFI1238)).